We begin with the raw amino-acid sequence, 319 residues long: ATP-dependent 6-phosphofructokinase (319 aa).

Gly-11 contributes to the ATP binding site. ADP is bound by residues 21 to 25 (RSVVR) and Asp-59. ATP-binding positions include 72–73 (RC) and 102–105 (GDGS). Residue Asp-103 participates in Mg(2+) binding. 125–127 (TID) lines the substrate pocket. The active-site Proton acceptor is the Asp-127. Arg-154 serves as a coordination point for ADP. Substrate contacts are provided by residues Arg-162 and 169–171 (MGR). Residues 185–187 (GAE), Arg-211, and 213–215 (KKH) contribute to the ADP site. Residues Glu-222, Arg-243, and 249–252 (HVQR) each bind substrate.

It belongs to the phosphofructokinase type A (PFKA) family. ATP-dependent PFK group I subfamily. Prokaryotic clade 'B1' sub-subfamily. As to quaternary structure, homotetramer. Requires Mg(2+) as cofactor.

The protein localises to the cytoplasm. It carries out the reaction beta-D-fructose 6-phosphate + ATP = beta-D-fructose 1,6-bisphosphate + ADP + H(+). The protein operates within carbohydrate degradation; glycolysis; D-glyceraldehyde 3-phosphate and glycerone phosphate from D-glucose: step 3/4. Allosterically activated by ADP and other diphosphonucleosides, and allosterically inhibited by phosphoenolpyruvate. Its function is as follows. Catalyzes the phosphorylation of D-fructose 6-phosphate to fructose 1,6-bisphosphate by ATP, the first committing step of glycolysis. The polypeptide is ATP-dependent 6-phosphofructokinase (Geobacillus stearothermophilus (Bacillus stearothermophilus)).